The chain runs to 180 residues: Bifunctional protein PyrR (180 aa).

Positions 101–113 (VILVDDVLYTGRT) match the PRPP-binding motif.

This sequence belongs to the purine/pyrimidine phosphoribosyltransferase family. PyrR subfamily. As to quaternary structure, homodimer and homohexamer; in equilibrium.

It catalyses the reaction UMP + diphosphate = 5-phospho-alpha-D-ribose 1-diphosphate + uracil. Functionally, regulates transcriptional attenuation of the pyrimidine nucleotide (pyr) operon by binding in a uridine-dependent manner to specific sites on pyr mRNA. This disrupts an antiterminator hairpin in the RNA and favors formation of a downstream transcription terminator, leading to a reduced expression of downstream genes. Its function is as follows. Also displays a weak uracil phosphoribosyltransferase activity which is not physiologically significant. This is Bifunctional protein PyrR from Bacillus thuringiensis subsp. konkukian (strain 97-27).